The following is a 302-amino-acid chain: uncharacterized protein (302 aa).

The protein belongs to the HAD-like hydrolase superfamily.

It is found in the cytoplasm. Its subcellular location is the nucleus. This is an uncharacterized protein from Schizosaccharomyces pombe (strain 972 / ATCC 24843) (Fission yeast).